Reading from the N-terminus, the 260-residue chain is Emerin (260 aa).

M1 is subject to N-acetylmethionine. Residues 1–45 (MDDYAVLSDTELAAVLRQYNIPHGPILGSTRKLYEKKIFEYETQR) enclose the LEM domain. Phosphoserine is present on residues S8 and S29. The segment at 46–224 (RRLSPPSSSS…PTAALGQDRQ (179 aa)) is interaction with F-actin. S49 carries the post-translational modification Phosphoserine; by PKA. A phosphoserine mark is found at S54, S69, S72, S88, S99, S142, S143, and S144. Y162 is subject to Phosphotyrosine. The interaction with CTNNB1 stretch occupies residues 169-188 (RPISNVSRSSLGLSYYPRSS). S172, S175, and S177 each carry phosphoserine. The interval 184 to 206 (YPRSSTSSVSSSSSSPSSWLTRR) is disordered. Residues 187 to 201 (SSTSSVSSSSSSPSS) show a composition bias toward low complexity. A helical membrane pass occupies residues 225-245 (VPLWGQLLLFLAFATFLLFVY).

As to quaternary structure, interacts with lamins A and C, BANF1, GMCL, BCLAF1 and YTHDC1/YT521. Interacts with TMEM43; the interaction retains emerin in the inner nuclear membrane. Interacts with ACTB, SPTAN1, F-actin, CTNNB1 and beta-tubulin. Interacts with SUN1 and SUN2. Interacts with TMEM201. Interacts with NEMP1.

It localises to the nucleus inner membrane. The protein localises to the nucleus outer membrane. Its function is as follows. Stabilizes and promotes the formation of a nuclear actin cortical network. Stimulates actin polymerization in vitro by binding and stabilizing the pointed end of growing filaments. Inhibits beta-catenin activity by preventing its accumulation in the nucleus. Acts by influencing the nuclear accumulation of beta-catenin through a CRM1-dependent export pathway. Links centrosomes to the nuclear envelope via a microtubule association. Required for proper localization of non-farnesylated prelamin-A/C. Together with NEMP1, contributes to nuclear envelope stiffness in germ cells. This is Emerin (Emd) from Rattus norvegicus (Rat).